The sequence spans 318 residues: 2-methyl-6-phytyl-1,4-hydroquinone methyltransferase (318 aa).

The signal sequence occupies residues 1-39 (MPEYLLLPAGLISLSLAIAAGLYLLTARGYQSSDSVANA). Residues 97–106 (VLDVGCGIGG) are SAM motif I. The segment at 157–165 (GSFDVVWSV) is SAM motif II. An SAM motif III region spans residues 184-193 (VVKPGGILVV).

It belongs to the class I-like SAM-binding methyltransferase superfamily. gTMT family.

The enzyme catalyses 2-methyl-6-phytyl-1,4-benzene-1,4-diol + S-adenosyl-L-methionine = 2,3-dimethyl-6-phytylbenzene-1,4-diol + S-adenosyl-L-homocysteine + H(+). The catalysed reaction is 2-methyl-6-(all-trans-nonaprenyl)benzene-1,4-diol + S-adenosyl-L-methionine = plastoquinol-9 + S-adenosyl-L-homocysteine + H(+). It carries out the reaction 6-geranylgeranyl-2-methylbenzene-1,4-diol + S-adenosyl-L-methionine = 6-geranylgeranyl-2,3-dimethylbenzene-1,4-diol + S-adenosyl-L-homocysteine + H(+). The protein operates within cofactor biosynthesis; tocopherol biosynthesis. In terms of biological role, involved in a key methylation step in both tocopherol (vitamin E) and plastoquinone synthesis. Catalyzes the conversion of 2-methyl-6-phytyl-1,4-hydroquinol (MPBQ) to 2,3-dimethyl-6-phytyl-1,4-hydroquinol (DMPQ, a substrate for tocopherol cyclase), and 2-methyl-6-solanyl-1,4-benzoquinol (MSBQ) to plastoquinol. This Synechocystis sp. (strain ATCC 27184 / PCC 6803 / Kazusa) protein is 2-methyl-6-phytyl-1,4-hydroquinone methyltransferase.